A 384-amino-acid chain; its full sequence is MSVSCCCRNLGKTIKKAIPSHHLHLRSLGGSLYRRRIQSSSMETDLKSTFLNVYSVLKSDLLHDPSFEFTNESRLWVDRMLDYNVRGGKLNRGLSVVDSFKLLKQGNDLTEQEVFLSCALGWCIEWLQAYFLVLDDIMDNSVTRRGQPCWFRVPQVGMVAINDGILLRNHIHRILKKHFRDKPYYVDLVDLFNEVELQTACGQMIDLITTFEGEKDLAKYSLSIHRRIVQYKTAYYSFYLPVACALLMAGENLENHIDVKNVLVDMGIYFQVQDDYLDCFADPETLGKIGTDIEDFKCSWLVVKALERCSEEQTKILYENYGKPDPSNVAKVKDLYKELDLEGVFMEYESKSYEKLTGAIEGHQSKAIQAVLKSFLAKIYKRQK.

Isopentenyl diphosphate contacts are provided by lysine 89, arginine 92, and glutamine 128. 2 residues coordinate Mg(2+): aspartate 135 and aspartate 139. Residue arginine 144 participates in dimethylallyl diphosphate binding. Isopentenyl diphosphate is bound at residue arginine 145. Dimethylallyl diphosphate is bound by residues lysine 232, threonine 233, glutamine 271, lysine 288, and lysine 297.

It belongs to the FPP/GGPP synthase family. Mg(2+) serves as cofactor. The FPS1L mRNA accumulates preferentially in inflorescences, whereas the FPS1S mRNA is predominantly expressed in roots and inflorescences.

The protein localises to the mitochondrion. Its subcellular location is the cytoplasm. It carries out the reaction isopentenyl diphosphate + dimethylallyl diphosphate = (2E)-geranyl diphosphate + diphosphate. It catalyses the reaction isopentenyl diphosphate + (2E)-geranyl diphosphate = (2E,6E)-farnesyl diphosphate + diphosphate. The protein operates within isoprenoid biosynthesis; farnesyl diphosphate biosynthesis; farnesyl diphosphate from geranyl diphosphate and isopentenyl diphosphate: step 1/1. It participates in isoprenoid biosynthesis; geranyl diphosphate biosynthesis; geranyl diphosphate from dimethylallyl diphosphate and isopentenyl diphosphate: step 1/1. Functionally, catalyzes the sequential condensation of isopentenyl pyrophosphate with the allylic pyrophosphates, dimethylallyl pyrophosphate, and then with the resultant geranylpyrophosphate to the ultimate product farnesyl pyrophosphate. The protein is Farnesyl pyrophosphate synthase 1, mitochondrial (FPS1) of Arabidopsis thaliana (Mouse-ear cress).